We begin with the raw amino-acid sequence, 341 residues long: Ketol-acid reductoisomerase (NADP(+)) (341 aa).

The 182-residue stretch at 1–182 (MTEMFYDDDA…GGTRAGVIKT (182 aa)) folds into the KARI N-terminal Rossmann domain. NADP(+) contacts are provided by residues 25–28 (YGSQ), Lys48, Ser51, Ser53, and 83–86 (DQHQ). His108 is a catalytic residue. Residue Gly134 coordinates NADP(+). The 146-residue stretch at 183 to 328 (TFTEETETDL…RELRGLFSWQ (146 aa)) folds into the KARI C-terminal knotted domain. Residues Asp191, Glu195, Glu227, and Glu231 each coordinate Mg(2+). Ser252 contributes to the substrate binding site.

It belongs to the ketol-acid reductoisomerase family. Mg(2+) is required as a cofactor.

The enzyme catalyses (2R)-2,3-dihydroxy-3-methylbutanoate + NADP(+) = (2S)-2-acetolactate + NADPH + H(+). It carries out the reaction (2R,3R)-2,3-dihydroxy-3-methylpentanoate + NADP(+) = (S)-2-ethyl-2-hydroxy-3-oxobutanoate + NADPH + H(+). It participates in amino-acid biosynthesis; L-isoleucine biosynthesis; L-isoleucine from 2-oxobutanoate: step 2/4. It functions in the pathway amino-acid biosynthesis; L-valine biosynthesis; L-valine from pyruvate: step 2/4. Its function is as follows. Involved in the biosynthesis of branched-chain amino acids (BCAA). Catalyzes an alkyl-migration followed by a ketol-acid reduction of (S)-2-acetolactate (S2AL) to yield (R)-2,3-dihydroxy-isovalerate. In the isomerase reaction, S2AL is rearranged via a Mg-dependent methyl migration to produce 3-hydroxy-3-methyl-2-ketobutyrate (HMKB). In the reductase reaction, this 2-ketoacid undergoes a metal-dependent reduction by NADPH to yield (R)-2,3-dihydroxy-isovalerate. The polypeptide is Ketol-acid reductoisomerase (NADP(+)) (Arthrobacter sp. (strain FB24)).